We begin with the raw amino-acid sequence, 380 residues long: Cytochrome b (380 aa).

Transmembrane regions (helical) follow at residues 34 to 54 (FGSLLGICLTTQILTGLLLAM), 78 to 99 (WLIRNIHANGASFFFICIYLHI), 114 to 134 (WNTGILLLLTLMATAFVGYVL), and 179 to 199 (FFALHFLLPFMIAGLTLIHLT). Heme b is bound by residues H84 and H98. Positions 183 and 197 each coordinate heme b. H202 contributes to the a ubiquinone binding site. Helical transmembrane passes span 227–247 (LKDTLGFMLMLLPLTTLALFS), 289–309 (LGGVLALAASVLILFLSPLLH), 321–341 (LSQLLFWILIANLFILTWVGS), and 348–368 (FIIIGQLASLTYFTILLILLP).

The protein belongs to the cytochrome b family. As to quaternary structure, the cytochrome bc1 complex contains 11 subunits: 3 respiratory subunits (MT-CYB, CYC1 and UQCRFS1), 2 core proteins (UQCRC1 and UQCRC2) and 6 low-molecular weight proteins (UQCRH/QCR6, UQCRB/QCR7, UQCRQ/QCR8, UQCR10/QCR9, UQCR11/QCR10 and a cleavage product of UQCRFS1). This cytochrome bc1 complex then forms a dimer. The cofactor is heme b.

It localises to the mitochondrion inner membrane. In terms of biological role, component of the ubiquinol-cytochrome c reductase complex (complex III or cytochrome b-c1 complex) that is part of the mitochondrial respiratory chain. The b-c1 complex mediates electron transfer from ubiquinol to cytochrome c. Contributes to the generation of a proton gradient across the mitochondrial membrane that is then used for ATP synthesis. The chain is Cytochrome b (MT-CYB) from Fregetta tropica (Black-bellied storm-petrel).